The primary structure comprises 168 residues: ATP synthase F(1) complex subunit delta, mitochondrial (168 aa).

A mitochondrion-targeting transit peptide spans 1 to 22 (MLPASLLRHPGLRRLMLQARTY). An N6-acetyllysine; alternate mark is found at lysine 136 and lysine 165. 2 positions are modified to N6-succinyllysine; alternate: lysine 136 and lysine 165.

It belongs to the ATPase epsilon chain family. Component of the ATP synthase complex composed at least of ATP5F1A/subunit alpha, ATP5F1B/subunit beta, ATP5MC1/subunit c (homooctomer), MT-ATP6/subunit a, MT-ATP8/subunit 8, ATP5ME/subunit e, ATP5MF/subunit f, ATP5MG/subunit g, ATP5MK/subunit k, ATP5MJ/subunit j, ATP5F1C/subunit gamma, ATP5F1D/subunit delta, ATP5F1E/subunit epsilon, ATP5PF/subunit F6, ATP5PB/subunit b, ATP5PD/subunit d, ATP5PO/subunit OSCP. ATP synthase complex consists of a soluble F(1) head domain (subunits alpha(3) and beta(3)) - the catalytic core - and a membrane F(0) domain - the membrane proton channel (subunits c, a, 8, e, f, g, k and j). These two domains are linked by a central stalk (subunits gamma, delta, and epsilon) rotating inside the F1 region and a stationary peripheral stalk (subunits F6, b, d, and OSCP). Component of a complex composed at least by ATPIF1, ATP5F1A, ATP5F1B, ATP5F1C AND ATP5F1E.

It is found in the mitochondrion. The protein localises to the mitochondrion inner membrane. Subunit delta, of the mitochondrial membrane ATP synthase complex (F(1)F(0) ATP synthase or Complex V) that produces ATP from ADP in the presence of a proton gradient across the membrane which is generated by electron transport complexes of the respiratory chain. ATP synthase complex consist of a soluble F(1) head domain - the catalytic core - and a membrane F(1) domain - the membrane proton channel. These two domains are linked by a central stalk rotating inside the F(1) region and a stationary peripheral stalk. During catalysis, ATP synthesis in the catalytic domain of F(1) is coupled via a rotary mechanism of the central stalk subunits to proton translocation. In vivo, can only synthesize ATP although its ATP hydrolase activity can be activated artificially in vitro. With the central stalk subunit gamma, is essential for the biogenesis of F(1) catalytic part of the ATP synthase complex namely in the formation of F1 assembly intermediate. The polypeptide is ATP synthase F(1) complex subunit delta, mitochondrial (Mus musculus (Mouse)).